A 254-amino-acid polypeptide reads, in one-letter code: MPHDNRLQTNTLAAQAAELPPAWQAALQAPAVARALAGVIAHIEQRLAEGAVVYPATPFRALQGLSPADVRVVILGQDPYHGPGQAQGLAFSVPDDCKRPPSLRNIFSQIAQEFTGAPLPRGNDLTRWTRQGVLLLNTSLTVEDGQPASHARRGWETVTDALISLVARDSTPKAFLLWGAHAQAKQVLLPDHSGHLVLKANHPSPLSARRPPAPFLGCGHFARVNAWLAEQGKTPIDWITEENEGDVRQGEFGL.

The active-site Proton acceptor is Asp78.

Belongs to the uracil-DNA glycosylase (UDG) superfamily. UNG family.

It localises to the cytoplasm. The catalysed reaction is Hydrolyzes single-stranded DNA or mismatched double-stranded DNA and polynucleotides, releasing free uracil.. In terms of biological role, excises uracil residues from the DNA which can arise as a result of misincorporation of dUMP residues by DNA polymerase or due to deamination of cytosine. The protein is Uracil-DNA glycosylase of Bordetella petrii (strain ATCC BAA-461 / DSM 12804 / CCUG 43448).